The sequence spans 972 residues: Aminopeptidase Ey (972 aa).

Residues 2–10 are Cytoplasmic-facing; sequence AAGFFISKS. A helical; Signal-anchor for type II membrane protein transmembrane segment spans residues 11 to 31; the sequence is VGIVGIVLALGAVATIIALSV. Residues 32-972 lie on the Extracellular side of the membrane; the sequence is VYAQEKNKSS…AWFRAETASS (941 aa). Positions 33–72 are cytosolic Ser/Thr-rich junction; sequence YAQEKNKSSGGSGGSDTTSTTTASTTTTSTTTASTTAAPN. The segment at 37-77 is disordered; that stretch reads KNKSSGGSGGSDTTSTTTASTTTTSTTTASTTAAPNNPWNR. N-linked (GlcNAc...) asparagine glycosylation is present at N38. The span at 47–70 shows a compositional bias: low complexity; sequence SDTTSTTTASTTTTSTTTASTTAA. Residues 73-967 are metalloprotease; it reads NPWNRWRLPT…KEVVHAWFRA (895 aa). Residues N110, N132, N147, N206, N269, and N296 are each glycosylated (N-linked (GlcNAc...) asparagine). 355–359 provides a ligand contact to substrate; it reads GAMEN. Residue H391 participates in Zn(2+) binding. E392 functions as the Proton acceptor in the catalytic mechanism. Positions 395 and 414 each coordinate Zn(2+). N-linked (GlcNAc...) asparagine glycosylation is found at N513, N574, N584, N628, N684, and N742. C764 and C771 are disulfide-bonded. N785 carries an N-linked (GlcNAc...) asparagine glycan. The cysteines at positions 801 and 837 are disulfide-linked.

This sequence belongs to the peptidase M1 family. As to quaternary structure, homodimer. The cofactor is Zn(2+). In terms of tissue distribution, detected in the plasma and granule fractions of egg yolk (at protein level).

It is found in the cell membrane. The catalysed reaction is Differs from other aminopeptidases in broad specificity for amino acids in the P1 position and the ability to hydrolyze peptides of four or five residues that contain Pro in the P1' position.. Functionally, broad specificity aminopeptidase. Degrades a variety of peptides possessing various N-terminal amino acids including hydrophobic, basic and acidic amino acids. Preferentially hydrolyzes small peptides consisting of 4 or 5 amino acids. Hydrolyzes the N-terminal Xaa-Pro bonds in the chicken brain peptide Leu-Pro-Leu-Arg-PheNH2, the substance P fragment Arg-Pro-Lys-Pro and the bradykinin fragment Arg-Pro-Pro-Gly-Phe. Hydrolyzes the N-formylated peptides fMet-Leu-Phe, fMet-Ala-Gly-Ser-Glu and fMet-Nle-Leu-Phe-Nle-Tyr-Lys, but does not hydrolyze peptides with acetylation or pyroglutamic acid at N-terminus. Does not hydrolyze large peptides such as complete substance P, bradykinin or schistoFLRFamide. The sequence is that of Aminopeptidase Ey (ANPEP) from Gallus gallus (Chicken).